A 509-amino-acid polypeptide reads, in one-letter code: Histone deacetylase 2 (509 aa).

The interval 24–338 (RRVCYFYDPE…WCYETGVALG (315 aa)) is histone deacetylase. The active-site Proton donor/acceptor is the H158. Residues D193, H195, and D281 each coordinate Zn(2+). Residues 394 to 509 (PSVQFEERIP…NAKNEPGSSL (116 aa)) form a disordered region. Composition is skewed to basic and acidic residues over residues 398-409 (FEERIPETKLPE), 418-434 (DERHDPDSDMLLDDHKP), and 448-472 (VKREITETETKDQHGKRLTTEHKVP). Positions 481–494 (SSKQVPTADANSMA) are enriched in polar residues.

This sequence belongs to the histone deacetylase family. HD Type 1 subfamily. Requires Zn(2+) as cofactor. In terms of tissue distribution, expressed in roots.

It localises to the nucleus. The enzyme catalyses N(6)-acetyl-L-lysyl-[histone] + H2O = L-lysyl-[histone] + acetate. Functionally, responsible for the deacetylation of lysine residues on the N-terminal part of the core histones (H2A, H2B, H3 and H4). Histone deacetylation gives a tag for epigenetic repression and plays an important role in transcriptional regulation, cell cycle progression and developmental events. Histone deacetylases act via the formation of large multiprotein complexes. The protein is Histone deacetylase 2 of Oryza sativa subsp. japonica (Rice).